The following is a 111-amino-acid chain: uncharacterized protein (111 aa).

The stretch at 4-51 (LGQVKVLEEKVAKAVHLVQMLKEENAALRAEIDGRGKRITELEQLVLX) forms a coiled coil.

This is an uncharacterized protein from Treponema pallidum (strain Nichols).